We begin with the raw amino-acid sequence, 83 residues long: Late seed maturation protein P8B6 (83 aa).

Composition is skewed to basic and acidic residues over residues 1-18 (MASQ…KKGE) and 37-51 (AEGR…KEQL). The tract at residues 1 to 83 (MASQQEKKQL…DAEDEPSTRT (83 aa)) is disordered. The span at 73–83 (EDAEDEPSTRT) shows a compositional bias: acidic residues.

The protein belongs to the small hydrophilic plant seed protein family.

The protein localises to the cytoplasm. In terms of biological role, this protein may play a role in equipping the seed for survival, maintaining a minimal level of hydration in the dry organism and preventing the denaturation of cytoplasmic components, or may play a role during imbibition by controlling water uptake. This Raphanus sativus (Radish) protein is Late seed maturation protein P8B6.